The sequence spans 532 residues: Membrane protein insertase YidC (532 aa).

A run of 5 helical transmembrane segments spans residues 7 to 27 (FFIF…QSQM), 336 to 356 (LTIL…ITFI), 413 to 433 (GGFL…YMLI), 450 to 470 (LSSQ…MFFI), and 492 to 512 (PVIF…YYII).

This sequence belongs to the OXA1/ALB3/YidC family. Type 1 subfamily. As to quaternary structure, interacts with the Sec translocase complex via SecD. Specifically interacts with transmembrane segments of nascent integral membrane proteins during membrane integration.

It is found in the cell membrane. Its function is as follows. Required for the insertion and/or proper folding and/or complex formation of integral membrane proteins into the membrane. Involved in integration of membrane proteins that insert both dependently and independently of the Sec translocase complex, as well as at least some lipoproteins. Aids folding of multispanning membrane proteins. The chain is Membrane protein insertase YidC from Buchnera aphidicola subsp. Acyrthosiphon pisum (strain Tuc7).